The following is a 472-amino-acid chain: Putative diacyglycerol O-acyltransferase MT3172 (472 aa).

His-139 (proton acceptor) is an active-site residue. Residues 217 to 238 (DRRVPPTFDRSAPPGPFQRGLS) are disordered.

Belongs to the long-chain O-acyltransferase family.

It carries out the reaction an acyl-CoA + a 1,2-diacyl-sn-glycerol = a triacyl-sn-glycerol + CoA. It functions in the pathway glycerolipid metabolism; triacylglycerol biosynthesis. The protein is Putative diacyglycerol O-acyltransferase MT3172 of Mycobacterium tuberculosis (strain CDC 1551 / Oshkosh).